Reading from the N-terminus, the 218-residue chain is Elongation factor Ts (218 aa).

The involved in Mg(2+) ion dislocation from EF-Tu stretch occupies residues 82–85 (TDFV).

This sequence belongs to the EF-Ts family.

The protein localises to the cytoplasm. Functionally, associates with the EF-Tu.GDP complex and induces the exchange of GDP to GTP. It remains bound to the aminoacyl-tRNA.EF-Tu.GTP complex up to the GTP hydrolysis stage on the ribosome. In Picosynechococcus sp. (strain ATCC 27264 / PCC 7002 / PR-6) (Agmenellum quadruplicatum), this protein is Elongation factor Ts.